The chain runs to 267 residues: MNRLTHCFNELKQRNTKALVTFITAGDPDLATTQAMIPLLQQAGADIIELGMPFSDPMADGPTIQLSSERALAASTTLERILAMVRAVRRSCQVPIVLMGYLNPIHAYGYERFANDAAEAGVDGVLVVDMPPEEAESFLNHANARDLQVAFLLTPTSTDSRIATVGRLGRGFVYYVTVTGVTGARQQVSTTLGGELAKVRAKISVPIVAGFGISTPQQAADVAAMADGVVVGSALVKLFQLHSGEELRQEVTRFVASLRQAIPGGAA.

Active-site proton acceptor residues include Glu49 and Asp60.

This sequence belongs to the TrpA family. As to quaternary structure, tetramer of two alpha and two beta chains.

It catalyses the reaction (1S,2R)-1-C-(indol-3-yl)glycerol 3-phosphate + L-serine = D-glyceraldehyde 3-phosphate + L-tryptophan + H2O. The protein operates within amino-acid biosynthesis; L-tryptophan biosynthesis; L-tryptophan from chorismate: step 5/5. Its function is as follows. The alpha subunit is responsible for the aldol cleavage of indoleglycerol phosphate to indole and glyceraldehyde 3-phosphate. The protein is Tryptophan synthase alpha chain of Pelobacter propionicus (strain DSM 2379 / NBRC 103807 / OttBd1).